A 68-amino-acid polypeptide reads, in one-letter code: Protein DsrB (68 aa).

The protein belongs to the DsrB family.

In Sodalis glossinidius (strain morsitans), this protein is Protein DsrB.